Consider the following 125-residue polypeptide: NLYQFGNMIQCANHGRRPTRHYMDYGCYCGKGGSGTPVDELDRCCQTHDDCYGEAEKLPACNYMMSGPYYNTYSYECNEGELTCKDNNDECKAFICNCDRTAAICFARAPYNDANWNIDTKTRCQ.

Disulfide bonds link cysteine 11–cysteine 77, cysteine 27–cysteine 124, cysteine 29–cysteine 45, cysteine 44–cysteine 105, cysteine 51–cysteine 98, cysteine 61–cysteine 91, and cysteine 84–cysteine 96. Ca(2+) contacts are provided by tyrosine 28, glycine 30, and glycine 32. Histidine 48 is an active-site residue. Residue aspartate 49 participates in Ca(2+) binding. Aspartate 99 is a catalytic residue.

It belongs to the phospholipase A2 family. Group I subfamily. D49 sub-subfamily. It depends on Ca(2+) as a cofactor. In terms of processing, no glycosylation was detected on this protein. As to expression, expressed by the venom gland.

The protein localises to the secreted. The enzyme catalyses a 1,2-diacyl-sn-glycero-3-phosphocholine + H2O = a 1-acyl-sn-glycero-3-phosphocholine + a fatty acid + H(+). In terms of biological role, snake venom phospholipase A2 (PLA2) that blocks neuromuscular transmission, but that does not produce blockade by virtue of a selective action on nerve endings. Instead, the toxin acts both on nerve and on muscle. PLA2 catalyzes the calcium-dependent hydrolysis of the 2-acyl groups in 3-sn-phosphoglycerides. The sequence is that of Acidic phospholipase A2 HTe from Notechis scutatus scutatus (Mainland tiger snake).